We begin with the raw amino-acid sequence, 354 residues long: Non-structural protein NS2 (354 aa).

2 disordered regions span residues 163–196 (NERE…DNEA) and 229–269 (DERD…THIT). Basic and acidic residues-rich tracts occupy residues 178-196 (SREE…DNEA) and 237-249 (DERG…KTLS). Over residues 250 to 260 (DDDDQGEDASD) the composition is skewed to acidic residues.

In terms of biological role, single-stranded RNA-binding protein. The chain is Non-structural protein NS2 (Segment-8) from Bluetongue virus 17 (isolate USA) (BTV 17).